We begin with the raw amino-acid sequence, 274 residues long: MSLQETIIQELGVKPVIDAQEEIRRSIDFLKRYLKKHPFLKTFVLGISGGQDSTLAGRLAQLAMEELRAETGDDSYKFIAVRLPYGVQADEADAQKALAFIQPDVSLVVNIKESADAMTAAVEATGSPVSDFNKGNIKARCRMIAQYALAGSHSGAVIGTDHAAENITGFFTKFGDGGADILPLYRLNKRQGKQLLQELGADPALYEKIPTADLEEDKPGLADEVALGVTYAEIDDYLEGKTISPEAQATIENWWHKGQHKRHLPITVFDDFWE.

ATP is bound at residue 46 to 53; that stretch reads GISGGQDS. Asp-52 contacts Mg(2+). Arg-140 contacts deamido-NAD(+). Residue Thr-160 participates in ATP binding. A Mg(2+)-binding site is contributed by Glu-165. Positions 173 and 180 each coordinate deamido-NAD(+). 2 residues coordinate ATP: Lys-189 and Thr-211. 260-261 provides a ligand contact to deamido-NAD(+); sequence HK.

Belongs to the NAD synthetase family. Homodimer.

The catalysed reaction is deamido-NAD(+) + NH4(+) + ATP = AMP + diphosphate + NAD(+) + H(+). It functions in the pathway cofactor biosynthesis; NAD(+) biosynthesis; NAD(+) from deamido-NAD(+) (ammonia route): step 1/1. Its function is as follows. Catalyzes the ATP-dependent amidation of deamido-NAD to form NAD. Uses ammonia as a nitrogen source. This is NH(3)-dependent NAD(+) synthetase from Streptococcus pneumoniae (strain 70585).